A 270-amino-acid polypeptide reads, in one-letter code: Undecaprenyl-diphosphatase (270 aa).

8 helical membrane passes run 1–21, 39–59, 87–107, 114–134, 147–167, 193–213, 223–243, and 250–270; these read MDLFNAAILALIQGITEFLPI, QGLVFDIAANSGSLAAVMLYF, SHLVLQLALATIPVGLVGLAC, VARDPMIIATTSILFGLLLWW, ALSWRQVGIIGIAQAFALIPG, FLMAIPVGILAALLDLKDLFA, FLGVGFCVSGLSAYMVIHGLL, and TMTPFVVYRVVLGVVIFATLG.

Belongs to the UppP family.

Its subcellular location is the cell inner membrane. It carries out the reaction di-trans,octa-cis-undecaprenyl diphosphate + H2O = di-trans,octa-cis-undecaprenyl phosphate + phosphate + H(+). In terms of biological role, catalyzes the dephosphorylation of undecaprenyl diphosphate (UPP). Confers resistance to bacitracin. The chain is Undecaprenyl-diphosphatase from Magnetococcus marinus (strain ATCC BAA-1437 / JCM 17883 / MC-1).